The chain runs to 272 residues: MARLAAFDMDGTLLMPDHHLGRETIATLARLRERDITLTFATGRHVLEMRHILGTLSLDAYLITGNGTRIHSLEGDVLHRQDLDPQVADTVMHHAWDTRASMHVFNDNGWFTGQEIPALLQAHVYSGFRYQVIDIKSIPAHQVTKICFCGDHDDLIRLRIQLNETLEERAHLCFSAVDCLEVLPLGCNKGSALAVLSNHLGLSLADCMAFGDAMNDREMLGSVGRGLIMGNAMPQLIAALPHLSVIGHCGNQAVSHFLTHWLDNPHLPYSPE.

Residue Asp-8 is the Nucleophile of the active site. Residues Asp-8, Asp-10, and Asp-212 each contribute to the Mg(2+) site.

It belongs to the HAD-like hydrolase superfamily. Cof family. It depends on Mg(2+) as a cofactor.

It catalyses the reaction 4-amino-2-methyl-5-(diphosphooxymethyl)pyrimidine + H2O = 4-amino-2-methyl-5-(phosphooxymethyl)pyrimidine + phosphate + H(+). Functionally, catalyzes the hydrolysis of 4-amino-2-methyl-5-hydroxymethylpyrimidine pyrophosphate (HMP-PP) to 4-amino-2-methyl-5-hydroxymethylpyrimidine phosphate (HMP-P). This Salmonella newport (strain SL254) protein is HMP-PP phosphatase.